The primary structure comprises 295 residues: uncharacterized protein (295 aa).

The segment covering 1–13 (MRHSVARPTRLPR) has biased composition (basic residues). 2 disordered regions span residues 1–111 (MRHS…AGLS) and 183–295 (TSAF…PRDS). Residues 57-67 (AGPSAGAAARP) show a composition bias toward low complexity. Positions 68–77 (AAPPPQPREP) are enriched in pro residues. 2 stretches are compositionally biased toward basic and acidic residues: residues 245–257 (LRPKGARADDRRP) and 280–295 (GEPHKAGEVGNHPRDS).

This is an uncharacterized protein from Homo sapiens (Human).